The sequence spans 246 residues: Probable hydroxyethylthiazole kinase (246 aa).

Met50 contributes to the substrate binding site. 2 residues coordinate ATP: Arg125 and Thr145. Gly172 contributes to the substrate binding site.

Belongs to the Thz kinase family. Mg(2+) is required as a cofactor.

The catalysed reaction is 5-(2-hydroxyethyl)-4-methylthiazole + ATP = 4-methyl-5-(2-phosphooxyethyl)-thiazole + ADP + H(+). It participates in cofactor biosynthesis; thiamine diphosphate biosynthesis; 4-methyl-5-(2-phosphoethyl)-thiazole from 5-(2-hydroxyethyl)-4-methylthiazole: step 1/1. In terms of biological role, catalyzes the phosphorylation of the hydroxyl group of 4-methyl-5-beta-hydroxyethylthiazole (THZ). The polypeptide is Probable hydroxyethylthiazole kinase (thiM) (Agrobacterium fabrum (strain C58 / ATCC 33970) (Agrobacterium tumefaciens (strain C58))).